The following is a 66-amino-acid chain: UPF0337 protein spyM18_1212 (66 aa).

This sequence belongs to the UPF0337 (CsbD) family.

In Streptococcus pyogenes serotype M18 (strain MGAS8232), this protein is UPF0337 protein spyM18_1212.